Reading from the N-terminus, the 728-residue chain is 1,4-alpha-glucan branching enzyme GlgB (728 aa).

Asp405 (nucleophile) is an active-site residue. Catalysis depends on Glu458, which acts as the Proton donor. Positions 686–712 (YHGSNAGNAGAVQSDEHESHGRPHSLS) are disordered.

This sequence belongs to the glycosyl hydrolase 13 family. GlgB subfamily. As to quaternary structure, monomer.

The enzyme catalyses Transfers a segment of a (1-&gt;4)-alpha-D-glucan chain to a primary hydroxy group in a similar glucan chain.. It participates in glycan biosynthesis; glycogen biosynthesis. Catalyzes the formation of the alpha-1,6-glucosidic linkages in glycogen by scission of a 1,4-alpha-linked oligosaccharide from growing alpha-1,4-glucan chains and the subsequent attachment of the oligosaccharide to the alpha-1,6 position. The sequence is that of 1,4-alpha-glucan branching enzyme GlgB from Enterobacter sp. (strain 638).